A 358-amino-acid chain; its full sequence is uncharacterized protein (358 aa).

It belongs to the serpin family. Poxviruses subfamily.

This is an uncharacterized protein from Fowlpox virus (strain NVSL) (FPV).